Consider the following 500-residue polypeptide: Pentatricopeptide repeat-containing protein At1g06580 (500 aa).

12 PPR repeats span residues 78–112 (SIVDFSRLLIAIAKLNKYEAVISLFRHLEMLGISH), 113–147 (DLYSFTTLIDCFCRCARLSLALSCLGKMMKLGFEP), 148–182 (SIVTFGSLVNGFCHVNRFYEAMSLVDQIVGLGYEP), 183–217 (NVVIYNTIIDSLCEKGQVNTALDVLKHMKKMGIRP), 218–252 (DVVTYNSLITRLFHSGTWGVSARILSDMMRMGISP), 253–287 (DVITFSALIDVYGKEGQLLEAKKQYNEMIQRSVNP), 288–322 (NIVTYNSLINGLCIHGLLDEAKKVLNVLVSKGFFP), 323–357 (NAVTYNTLINGYCKAKRVDDGMKILCVMSRDGVDG), 358–392 (DTFTYNTLYQGYCQAGKFSAAEKVLGRMVSCGVHP), 393–427 (DMYTFNILLDGLCDHGKIGKALVRLEDLQKSKTVV), 428–462 (GIITYNIIIKGLCKADKVEDAWYLFCSLALKGVSP), and 463–498 (DVITYITMMIGLRRKRLWREAHELYRKMQKEDGLMP).

Belongs to the PPR family. P subfamily.

This is Pentatricopeptide repeat-containing protein At1g06580 from Arabidopsis thaliana (Mouse-ear cress).